The following is a 230-amino-acid chain: UPF0173 metal-dependent hydrolase Pden_0574 (230 aa).

The protein belongs to the UPF0173 family.

In Paracoccus denitrificans (strain Pd 1222), this protein is UPF0173 metal-dependent hydrolase Pden_0574.